Consider the following 274-residue polypeptide: Cytochrome b-c1 complex subunit Rieske, mitochondrial (274 aa).

Residues 79–103 (SHTDIKVPDFSDYRRSEVLDKTKSS) are Mitochondrial matrix-facing. The chain crosses the membrane as a helical span at residues 104 to 140 (RESSDARKGFSYLVTAATAVGVTYAAKSIVTQFVSSM). The Mitochondrial intermembrane portion of the chain corresponds to 141–274 (SASADVLAMS…FTGDDMVIVG (134 aa)). Positions 187–272 (EAAVELSQLR…YEFTGDDMVI (86 aa)) constitute a Rieske domain. [2Fe-2S] cluster is bound by residues Cys-217, His-219, Cys-236, His-239, and Ser-241. Cys-222 and Cys-238 are joined by a disulfide.

It belongs to the Rieske iron-sulfur protein family. In terms of assembly, component of the ubiquinol-cytochrome c oxidoreductase (cytochrome b-c1 complex, complex III, CIII), a multisubunit enzyme composed of 11 subunits. The complex is composed of 3 respiratory subunits cytochrome b, cytochrome c1 and Rieske protein UQCRFS1, 2 core protein subunits UQCRC1/QCR1 and UQCRC2/QCR2, and 6 low-molecular weight protein subunits UQCRH/QCR6, UQCRB/QCR7, UQCRQ/QCR8, UQCR10/QCR9, UQCR11/QCR10 and subunit 9, the cleavage product of Rieske protein UQCRFS1. The complex exists as an obligatory dimer and forms supercomplexes (SCs) in the inner mitochondrial membrane with NADH-ubiquinone oxidoreductase (complex I, CI) and cytochrome c oxidase (complex IV, CIV), resulting in different assemblies (supercomplex SCI(1)III(2)IV(1) and megacomplex MCI(2)III(2)IV(2)). Incorporation of the Rieske protein UQCRFS1 is the penultimate step in complex III assembly. Interacts with TTC19, which is involved in the clearance of UQCRFS1 fragments. Component of the ubiquinol-cytochrome c oxidoreductase (cytochrome b-c1 complex, complex III, CIII). Subunit 9 corresponds to the mitochondrial targeting sequence (MTS) of Rieske protein UQCRFS1. It is retained after processing and incorporated inside complex III, where it remains bound to the complex and localizes between the 2 core subunits UQCRC1/QCR1 and UQCRC2/QCR2. The cofactor is [2Fe-2S] cluster. Proteolytic processing is necessary for the correct insertion of UQCRFS1 in the complex III dimer. Several fragments are generated during UQCRFS1 insertion, most probably due to the endogenous matrix-processing peptidase (MPP) activity of the 2 core protein subunits UQCRC1/QCR1 and UQCRC2/QCR2, which are homologous to the 2 mitochondrial-processing peptidase (MPP) subunits beta-MPP and alpha-MPP respectively. The action of the protease is also necessary for the clearance of the UQCRFS1 fragments.

The protein localises to the mitochondrion inner membrane. The catalysed reaction is a quinol + 2 Fe(III)-[cytochrome c](out) = a quinone + 2 Fe(II)-[cytochrome c](out) + 2 H(+)(out). In terms of biological role, component of the ubiquinol-cytochrome c oxidoreductase, a multisubunit transmembrane complex that is part of the mitochondrial electron transport chain which drives oxidative phosphorylation. The respiratory chain contains 3 multisubunit complexes succinate dehydrogenase (complex II, CII), ubiquinol-cytochrome c oxidoreductase (cytochrome b-c1 complex, complex III, CIII) and cytochrome c oxidase (complex IV, CIV), that cooperate to transfer electrons derived from NADH and succinate to molecular oxygen, creating an electrochemical gradient over the inner membrane that drives transmembrane transport and the ATP synthase. The cytochrome b-c1 complex catalyzes electron transfer from ubiquinol to cytochrome c, linking this redox reaction to translocation of protons across the mitochondrial inner membrane, with protons being carried across the membrane as hydrogens on the quinol. In the process called Q cycle, 2 protons are consumed from the matrix, 4 protons are released into the intermembrane space and 2 electrons are passed to cytochrome c. The Rieske protein is a catalytic core subunit containing a [2Fe-2S] iron-sulfur cluster. It cycles between 2 conformational states during catalysis to transfer electrons from the quinol bound in the Q(0) site in cytochrome b to cytochrome c1. Incorporation of UQCRFS1 is the penultimate step in complex III assembly. Component of the ubiquinol-cytochrome c oxidoreductase (cytochrome b-c1 complex, complex III, CIII). UQCRFS1 undergoes proteolytic processing once it is incorporated in the complex III dimer. One of the fragments, called subunit 9, corresponds to its mitochondrial targeting sequence (MTS). The proteolytic processing is necessary for the correct insertion of UQCRFS1 in the complex III dimer, but the persistence of UQCRFS1-derived fragments may prevent newly imported UQCRFS1 to be processed and assembled into complex III and is detrimental for the complex III structure and function. This is Cytochrome b-c1 complex subunit Rieske, mitochondrial (UQCRFS1) from Lagothrix lagotricha (Brown woolly monkey).